A 190-amino-acid chain; its full sequence is Threonylcarbamoyl-AMP synthase (190 aa).

Positions Ala7–Gly190 constitute a YrdC-like domain.

This sequence belongs to the SUA5 family. TsaC subfamily.

It localises to the cytoplasm. The catalysed reaction is L-threonine + hydrogencarbonate + ATP = L-threonylcarbamoyladenylate + diphosphate + H2O. Its function is as follows. Required for the formation of a threonylcarbamoyl group on adenosine at position 37 (t(6)A37) in tRNAs that read codons beginning with adenine. Catalyzes the conversion of L-threonine, HCO(3)(-)/CO(2) and ATP to give threonylcarbamoyl-AMP (TC-AMP) as the acyladenylate intermediate, with the release of diphosphate. The protein is Threonylcarbamoyl-AMP synthase of Cronobacter sakazakii (strain ATCC BAA-894) (Enterobacter sakazakii).